We begin with the raw amino-acid sequence, 508 residues long: Alpha-amylase (508 aa).

The N-terminal stretch at 1–19 is a signal peptide; it reads MLSLIIAACCVTVALAGTF. Residues cysteine 46 and cysteine 102 are joined by a disulfide bond. 3 residues coordinate Ca(2+): asparagine 116, arginine 173, and aspartate 182. A disulfide bridge connects residues cysteine 156 and cysteine 175. Arginine 210 lines the chloride pocket. Aspartate 212 serves as the catalytic Nucleophile. Histidine 216 is a Ca(2+) binding site. The active-site Proton donor is glutamate 248. Positions 311 and 349 each coordinate chloride. Intrachain disulfides connect cysteine 383–cysteine 389 and cysteine 455–cysteine 467.

Belongs to the glycosyl hydrolase 13 family. Monomer. Ca(2+) serves as cofactor. Chloride is required as a cofactor.

It catalyses the reaction Endohydrolysis of (1-&gt;4)-alpha-D-glucosidic linkages in polysaccharides containing three or more (1-&gt;4)-alpha-linked D-glucose units.. The sequence is that of Alpha-amylase from Pecten maximus (King scallop).